We begin with the raw amino-acid sequence, 326 residues long: Ribose-phosphate pyrophosphokinase 4 (326 aa).

D140, H142, H151, and D155 together coordinate Mg(2+).

It belongs to the ribose-phosphate pyrophosphokinase family.

The protein resides in the cytoplasm. The catalysed reaction is D-ribose 5-phosphate + ATP = 5-phospho-alpha-D-ribose 1-diphosphate + AMP + H(+). It functions in the pathway metabolic intermediate biosynthesis; 5-phospho-alpha-D-ribose 1-diphosphate biosynthesis; 5-phospho-alpha-D-ribose 1-diphosphate from D-ribose 5-phosphate (route I): step 1/1. Functionally, 5-phosphoribose 1-diphosphate synthase involved in nucleotide, histidine, and tryptophan biosynthesis. Active in heteromultimeric complexes with other 5-phosphoribose 1-diphosphate synthases (PRS2, PRS3, PRS4 and PRS5). This Saccharomyces cerevisiae (strain ATCC 204508 / S288c) (Baker's yeast) protein is Ribose-phosphate pyrophosphokinase 4 (PRS4).